The following is a 1876-amino-acid chain: Phenolphthiocerol/phthiocerol polyketide synthase subunit A (1876 aa).

The 75-residue stretch at 9–83 (ADLRHWLIDY…ALAAYLAAPE (75 aa)) folds into the Carrier 1 domain. Position 43 is an O-(pantetheine 4'-phosphoryl)serine (Ser-43). One can recognise a Ketosynthase family 3 (KS3) domain in the interval 101-526 (DEPIAVVGMG…GTNAHVVIEQ (426 aa)). Residues Cys-273, His-408, and His-448 each act as for beta-ketoacyl synthase activity in the active site. The tract at residues 624–950 (EGSPGPGTVF…NLNKAHTIHP (327 aa)) is acyltransferase. The active-site For malonyltransferase activity is the Ser-720. Residues 997–1112 (HTTVATVSAS…AQLSSSPSDS (116 aa)) are N-terminal hotdog fold. The 271-residue stretch at 997–1267 (HTTVATVSAS…YRALDFGLDV (271 aa)) folds into the PKS/mFAS DH domain. His-1027 serves as the catalytic Proton acceptor; for dehydratase activity. The disordered stretch occupies residues 1104-1130 (QLSSSPSDSASSLNEHHRANGQPPERA). Residues 1106–1115 (SSSPSDSASS) are compositionally biased toward low complexity. Residues 1130 to 1267 (AHRDLIPDLA…YRALDFGLDV (138 aa)) are C-terminal hotdog fold. The active-site Proton donor; for dehydratase activity is Asp-1186. The beta-ketoacyl reductase stretch occupies residues 1491 to 1728 (AAYLITGGLG…DGYDVAQAVV (238 aa)). An NADP(+)-binding site is contributed by 1492-1551 (AYLITGGLGALGLLMADWLADRGAHRLVLTGRTPLPPRRDWQLDTLDTELRRRIDAIRAL). In terms of domain architecture, Carrier 2 spans 1759-1836 (EVRSELEQGL…SLASYLAKRV (78 aa)). Residue Ser-1796 is modified to O-(pantetheine 4'-phosphoryl)serine.

It depends on NADP(+) as a cofactor. Pantetheine 4'-phosphate is required as a cofactor.

The catalysed reaction is icosanoyl-[(phenol)carboxyphthiodiolenone synthase] + 2 (S)-methylmalonyl-CoA + 3 malonyl-CoA + 5 NADPH + 10 H(+) = C32-carboxyphthiodiolenone-[(phenol)carboxyphthiodiolenone synthase] + 5 CO2 + 5 NADP(+) + 5 CoA + 2 H2O. The enzyme catalyses docosanoyl-[(phenol)carboxyphthiodiolenone synthase] + 2 (S)-methylmalonyl-CoA + 3 malonyl-CoA + 5 NADPH + 10 H(+) = C34-carboxyphthiodiolenone-[(phenol)carboxyphthiodiolenone synthase] + 5 CO2 + 5 NADP(+) + 5 CoA + 2 H2O. It catalyses the reaction 17-(4-hydroxyphenyl)heptadecanoyl-[(phenol)carboxyphthiodiolenone synthase] + 2 (S)-methylmalonyl-CoA + 3 malonyl-CoA + 5 NADPH + 10 H(+) = C35-(phenol)carboxyphthiodiolenone-[(phenol)carboxyphthiodiolenone synthase] + 5 CO2 + 5 NADP(+) + 5 CoA + 2 H2O. It carries out the reaction 19-(4-hydroxyphenyl)nonadecanoyl-[(phenol)carboxyphthiodiolenone synthase] + 2 (S)-methylmalonyl-CoA + 3 malonyl-CoA + 5 NADPH + 10 H(+) = C37-(phenol)carboxyphthiodiolenone-[(phenol)carboxyphthiodiolenone synthase] + 5 CO2 + 5 NADP(+) + 5 CoA + 2 H2O. The protein operates within lipid metabolism; fatty acid biosynthesis. Part of the PpsABCDE complex involved in the biosynthesis of the lipid core common to phthiocerols and phenolphthiocerols by successive additions of malonyl-CoA or methylmalonyl-CoA extender units. PpsA can accept as substrate the activated forms of either icosanoyl (C20), docosanoyl (C22) or lignoceroyl (C24) groups from FadD26, or a (4-hydroxyphenyl)-C17 or (4-hydroxyphenyl)-C19 fatty acyl from FadD29. PpsA initiates the biosynthesis and extends its substrate using a malonyl-CoA extender unit. The PpsB and PpsC proteins add the second and third malonyl-CoA extender units. PpsD adds an (R)-methylmalonyl unit and PpsE adds a second (R)-methylmalonyl unit. The incorporation of the methylmalonyl units results in formation of two branched methyl groups in the elongated product. The sequence is that of Phenolphthiocerol/phthiocerol polyketide synthase subunit A (ppsA) from Mycobacterium bovis (strain ATCC BAA-935 / AF2122/97).